A 392-amino-acid polypeptide reads, in one-letter code: Serine protease ea (392 aa).

The signal sequence occupies residues 1–19 (MLKPSIICLFLGILAKSSA). Residues 20-127 (GQFYFPNEAA…GQCGNILSNR (108 aa)) constitute a propeptide, activation peptide. Residues 36–89 (RCITPNRERALCIHLEDCKYLYGLLTTTPLRDTDRLYLSRSQCGYTNGKVLICC) enclose the Clip domain. 3 disulfides stabilise this stretch: Cys-37–Cys-88, Cys-47–Cys-78, and Cys-53–Cys-89. N-linked (GlcNAc...) asparagine glycosylation occurs at Asn-107. Disulfide bonds link Cys-120–Cys-260, Cys-158–Cys-174, Cys-202–Cys-212, Cys-307–Cys-324, and Cys-334–Cys-367. The Peptidase S1 domain maps to 128 to 391 (IYGGMKTKID…YVDWIQNTIE (264 aa)). His-173 serves as the catalytic Charge relay system. Positions 193, 195, 198, and 201 each coordinate Ca(2+). Residue Asp-240 is the Charge relay system of the active site. Catalysis depends on Ser-338, which acts as the Charge relay system.

This sequence belongs to the peptidase S1 family. CLIP subfamily. In terms of assembly, interacts with Spn27A; the two proteins are covalently linked leading to inhibition of ea catalytic activity. Interacts (via Peptidase domain) with snk (via N-terminal prodomain); leads to proteolytic activation of ea by snk. Sulfation of a vitelline membrane component by pip is required for proteolytic cleavage of ea by snk but not for the interaction of ea with snk. Proteolytically cleaved by snk. Activation peptide and active catalytic domain remain associated by a disulfide bond. Processed ea/easter is present in extremely low amounts in the early embryo as it is rapidly converted into a high molecular mass complex made up of ea covalently bound to the serpin Spn27A. Zymogen activation is also controlled by a negative feedback loop from Dorsal.

It localises to the secreted. Its activity is regulated as follows. Activated proteolytically by snk; activation requires both activation of the ndl-gd-snk protease cascade and sulfation of a vitelline membrane component by pip. Inhibited by binding of the serpin Spn27A. In terms of biological role, component of the extracellular signaling pathway that establishes the dorsal-ventral pathway of the embryo. A protease cascade involving ndl, gd, snk and ea results in activation of the spz Toll receptor ligand; acts downstream of ndl, gd and snk and is required for proteolytic processing of spz. Activation of ea requires both activation of the ndl-gd-snk protease cascade and sulfation of a vitelline membrane component by pip. Localized activation of the Toll receptor in the ventral region of the embryo defines cell identities along the dorsal-ventral continuum. The protein is Serine protease ea of Drosophila melanogaster (Fruit fly).